We begin with the raw amino-acid sequence, 176 residues long: ATP-dependent protease subunit HslV (176 aa).

The active site involves T2. The Na(+) site is built by G157, C160, and T163.

The protein belongs to the peptidase T1B family. HslV subfamily. A double ring-shaped homohexamer of HslV is capped on each side by a ring-shaped HslU homohexamer. The assembly of the HslU/HslV complex is dependent on binding of ATP.

The protein localises to the cytoplasm. The enzyme catalyses ATP-dependent cleavage of peptide bonds with broad specificity.. With respect to regulation, allosterically activated by HslU binding. Its function is as follows. Protease subunit of a proteasome-like degradation complex believed to be a general protein degrading machinery. This Pseudomonas savastanoi pv. phaseolicola (strain 1448A / Race 6) (Pseudomonas syringae pv. phaseolicola (strain 1448A / Race 6)) protein is ATP-dependent protease subunit HslV.